A 386-amino-acid polypeptide reads, in one-letter code: MKLKLVIDSDSDDYRLFKTTISTVAQLRKTAVLRFTTDRLIVVSTPKTAASGAILSGDQGQLWCTIPRDIFTLYNVASIREQNAIAMECQCDSLVNVLRRYERCNHGPLTIKLQSTPEWNQVHTGIQQGEENKPMGNPICALSCAFTEHLGYEDSGKEVSHVFKVGVRLLYKSQDARIVEPMVNYTKLLMFQLPPVNGEYGSKFTSFVKRLDRYATLNHLMIYGDRNSDRSDEGRLRLLVQELDWKLDVQWRGPLEMIVQDDQPSAVPASEPGLVGNVRHLNAGTSMQIEDSEMDIEATDIGNVSTSRPSTSVSPQEQTSQVFIKAKDWKVCSKLYDSFEEVVLAISHDESCVLHCSLDRGTVDEHSTKSKERGQIIYYMARSKPL.

This sequence belongs to the MEC3 family. As to quaternary structure, component of the checkpoint clamp complex composed of DDC1, MEC3 and RAD17.

The protein localises to the nucleus. Its function is as follows. Component of the checkpoint clamp complex involved in the surveillance mechanism that allows the DNA repair pathways to act to restore the integrity of the DNA prior to DNA synthesis or separation of the replicated chromosomes. This is DNA damage checkpoint control protein MEC3 (MEC3) from Eremothecium gossypii (strain ATCC 10895 / CBS 109.51 / FGSC 9923 / NRRL Y-1056) (Yeast).